A 246-amino-acid polypeptide reads, in one-letter code: Ubiquinone biosynthesis O-methyltransferase (246 aa).

Residues R44, G63, D84, and M128 each contribute to the S-adenosyl-L-methionine site.

It belongs to the methyltransferase superfamily. UbiG/COQ3 family.

It catalyses the reaction a 3-demethylubiquinol + S-adenosyl-L-methionine = a ubiquinol + S-adenosyl-L-homocysteine + H(+). The catalysed reaction is a 3-(all-trans-polyprenyl)benzene-1,2-diol + S-adenosyl-L-methionine = a 2-methoxy-6-(all-trans-polyprenyl)phenol + S-adenosyl-L-homocysteine + H(+). Its pathway is cofactor biosynthesis; ubiquinone biosynthesis. O-methyltransferase that catalyzes the 2 O-methylation steps in the ubiquinone biosynthetic pathway. The polypeptide is Ubiquinone biosynthesis O-methyltransferase (Xylella fastidiosa (strain 9a5c)).